The following is a 182-amino-acid chain: Coiled-coil domain-containing protein 32 (182 aa).

Positions 1 to 10 (MMIDDFETHA) are enriched in basic and acidic residues. 2 disordered regions span residues 1–61 (MMID…FSPW) and 153–182 (PTQN…SPEK). The segment covering 153 to 167 (PTQNSETPASSSQTD) has biased composition (polar residues). The span at 172–182 (EEEEECPSPEK) shows a compositional bias: acidic residues.

Associates with adaptor protein complex 2 (AP-2).

It localises to the membrane. The protein localises to the coated pit. In terms of biological role, regulates clathrin-mediated endocytsois of cargos such as transferrin probably through the association and modulation of adaptor protein complex 2 (AP-2). Has a role in ciliogenesis and is required for proper cephalic and left/right axis development. The chain is Coiled-coil domain-containing protein 32 from Danio rerio (Zebrafish).